Here is a 123-residue protein sequence, read N- to C-terminus: U9-barytoxin-Tl1a (123 aa).

Positions 1–18 are cleaved as a signal peptide; that stretch reads MNTMITFLVLFVLTAANG. A propeptide spanning residues 19-77 is cleaved from the precursor; sequence APEANERKIPEAIHNEDQSLAEMAEELMFFLQQTEFEAPLLQEEEEAEXAEXRNSRERR. Intrachain disulfides connect cysteine 78/cysteine 93, cysteine 85/cysteine 98, and cysteine 92/cysteine 112.

It belongs to the neurotoxin 14 (magi-1) family. 05 (ICK-7) subfamily. ICK-7 sub-subfamily. Expressed by the venom gland.

Its subcellular location is the secreted. Ion channel inhibitor. This chain is U9-barytoxin-Tl1a, found in Trittame loki (Brush-footed trapdoor spider).